A 722-amino-acid polypeptide reads, in one-letter code: DUF724 domain-containing protein 7 (722 aa).

Residues 424-449 (KTTPKKKLQAMKNQKSSTNDSVGEKV) form a disordered region. The span at 434–444 (MKNQKSSTNDS) shows a compositional bias: polar residues. The DUF724 domain occupies 540 to 720 (VLPFVKKSQL…HEFQAILAAP (181 aa)). The stretch at 645 to 712 (CALEELKAVE…DQEVQNVDHE (68 aa)) forms a coiled coil.

In terms of assembly, homodimer. Interacts wtih ABAP1, ARIA and LHP1. Interacts with the non-modified histones H1, H2B, H3 and H4. Expressed in roots, leaves, stems and flowers.

The protein localises to the nucleus. May act as a link between DNA replication, transcription and chromatin remodeling during flower development. May participate in the repression of LHP1-targeted genes during flower development by direct interaction with LHP1. May be involved in the polar growth of plant cells via transportation of RNAs. This is DUF724 domain-containing protein 7 from Arabidopsis thaliana (Mouse-ear cress).